Here is a 321-residue protein sequence, read N- to C-terminus: Cytochrome c biogenesis protein CcsA (321 aa).

The next 8 helical transmembrane spans lie at 9–29 (ILTH…LMTL), 44–64 (GLIA…IYSG), 71–91 (LYES…VPYF), 97–117 (LLST…TSGL), 143–163 (MILS…LLVI), 227–247 (VISL…VWAN), 261–275 (TWAF…IYLH), and 288–308 (AIVA…VNLL).

This sequence belongs to the CcmF/CycK/Ccl1/NrfE/CcsA family. In terms of assembly, may interact with Ccs1.

Its subcellular location is the plastid. It is found in the chloroplast thylakoid membrane. Functionally, required during biogenesis of c-type cytochromes (cytochrome c6 and cytochrome f) at the step of heme attachment. The chain is Cytochrome c biogenesis protein CcsA from Nandina domestica (Heavenly bamboo).